Here is a 131-residue protein sequence, read N- to C-terminus: Profilin-1 (131 aa).

This sequence belongs to the profilin family. As to quaternary structure, occurs in many kinds of cells as a complex with monomeric actin in a 1:1 ratio.

It localises to the cytoplasm. The protein resides in the cytoskeleton. In terms of biological role, binds to actin and affects the structure of the cytoskeleton. At high concentrations, profilin prevents the polymerization of actin, whereas it enhances it at low concentrations. By binding to PIP2, it inhibits the formation of IP3 and DG. The protein is Profilin-1 of Hevea brasiliensis (Para rubber tree).